A 222-amino-acid polypeptide reads, in one-letter code: Cytidylate kinase (222 aa).

10–18 (GTSSSGKSV) contacts ATP.

This sequence belongs to the cytidylate kinase family. Type 1 subfamily.

The protein resides in the cytoplasm. It carries out the reaction CMP + ATP = CDP + ADP. The catalysed reaction is dCMP + ATP = dCDP + ADP. This Mycoplasma capricolum subsp. capricolum (strain California kid / ATCC 27343 / NCTC 10154) protein is Cytidylate kinase.